Reading from the N-terminus, the 241-residue chain is Protein unc-119 homolog B-B (241 aa).

The segment at 1 to 46 is disordered; the sequence is MSGSNREAALAGQPKDERKKSGGGVINRLKARRVQGKESGTSDQSS. Position 132 (Y132) interacts with tetradecanoate.

This sequence belongs to the PDE6D/unc-119 family.

The protein resides in the cell projection. The protein localises to the cilium. Its function is as follows. Myristoyl-binding protein that acts as a cargo adapter: specifically binds the myristoyl moiety of a subset of N-terminally myristoylated proteins and is required for their localization. Plays a key role in localization of proteins to the primary cilium membrane. The chain is Protein unc-119 homolog B-B (unc119b-b) from Xenopus laevis (African clawed frog).